The primary structure comprises 122 residues: Large ribosomal subunit protein uL14 (122 aa).

The protein belongs to the universal ribosomal protein uL14 family. Part of the 50S ribosomal subunit. Forms a cluster with proteins L3 and L19. In the 70S ribosome, L14 and L19 interact and together make contacts with the 16S rRNA in bridges B5 and B8.

Its function is as follows. Binds to 23S rRNA. Forms part of two intersubunit bridges in the 70S ribosome. The polypeptide is Large ribosomal subunit protein uL14 (Geobacillus kaustophilus (strain HTA426)).